A 500-amino-acid chain; its full sequence is Probable glycine dehydrogenase (decarboxylating) subunit 2 (500 aa).

Lysine 273 bears the N6-(pyridoxal phosphate)lysine mark.

The protein belongs to the GcvP family. C-terminal subunit subfamily. The glycine cleavage system is composed of four proteins: P, T, L and H. In this organism, the P 'protein' is a heterodimer of two subunits. It depends on pyridoxal 5'-phosphate as a cofactor.

The enzyme catalyses N(6)-[(R)-lipoyl]-L-lysyl-[glycine-cleavage complex H protein] + glycine + H(+) = N(6)-[(R)-S(8)-aminomethyldihydrolipoyl]-L-lysyl-[glycine-cleavage complex H protein] + CO2. Its function is as follows. The glycine cleavage system catalyzes the degradation of glycine. The P protein binds the alpha-amino group of glycine through its pyridoxal phosphate cofactor; CO(2) is released and the remaining methylamine moiety is then transferred to the lipoamide cofactor of the H protein. This chain is Probable glycine dehydrogenase (decarboxylating) subunit 2, found in Rhodopirellula baltica (strain DSM 10527 / NCIMB 13988 / SH1).